The sequence spans 119 residues: Protein TusC (119 aa).

This sequence belongs to the DsrF/TusC family. In terms of assembly, heterohexamer, formed by a dimer of trimers. The hexameric TusBCD complex contains 2 copies each of TusB, TusC and TusD. The TusBCD complex interacts with TusE.

The protein resides in the cytoplasm. Part of a sulfur-relay system required for 2-thiolation of 5-methylaminomethyl-2-thiouridine (mnm(5)s(2)U) at tRNA wobble positions. The sequence is that of Protein TusC from Buchnera aphidicola subsp. Acyrthosiphon pisum (strain 5A).